Reading from the N-terminus, the 360-residue chain is 3-dehydroquinate synthase (360 aa).

NAD(+)-binding positions include 70–75 (DGESLK), 128–129 (TT), lysine 141, and lysine 150. Zn(2+) contacts are provided by glutamate 182, histidine 243, and histidine 259.

Belongs to the sugar phosphate cyclases superfamily. Dehydroquinate synthase family. The cofactor is NAD(+). Co(2+) serves as cofactor. Requires Zn(2+) as cofactor.

Its subcellular location is the cytoplasm. The enzyme catalyses 7-phospho-2-dehydro-3-deoxy-D-arabino-heptonate = 3-dehydroquinate + phosphate. The protein operates within metabolic intermediate biosynthesis; chorismate biosynthesis; chorismate from D-erythrose 4-phosphate and phosphoenolpyruvate: step 2/7. Its function is as follows. Catalyzes the conversion of 3-deoxy-D-arabino-heptulosonate 7-phosphate (DAHP) to dehydroquinate (DHQ). The sequence is that of 3-dehydroquinate synthase from Thermoplasma volcanium (strain ATCC 51530 / DSM 4299 / JCM 9571 / NBRC 15438 / GSS1).